A 496-amino-acid polypeptide reads, in one-letter code: Lysine--tRNA ligase (496 aa).

Mg(2+) is bound by residues Glu-408 and Glu-415.

This sequence belongs to the class-II aminoacyl-tRNA synthetase family. Homodimer. Requires Mg(2+) as cofactor.

Its subcellular location is the cytoplasm. The enzyme catalyses tRNA(Lys) + L-lysine + ATP = L-lysyl-tRNA(Lys) + AMP + diphosphate. The sequence is that of Lysine--tRNA ligase from Legionella pneumophila (strain Corby).